The following is a 118-amino-acid chain: Protein MGF 110-6L (118 aa).

Residues 1 to 18 (MLVTFLGILGLLASQVSS) form the signal peptide. The Prevents secretion from ER signature appears at 115 to 118 (KDEL).

Belongs to the asfivirus MGF 110 family. Post-translationally, N-glycosylated.

It localises to the host endoplasmic reticulum lumen. In terms of biological role, plays a role in virus cell tropism, and may be required for efficient virus replication in macrophages. In Ornithodoros (relapsing fever ticks), this protein is Protein MGF 110-6L.